A 239-amino-acid chain; its full sequence is tRNA1(Val) (adenine(37)-N6)-methyltransferase (239 aa).

This sequence belongs to the methyltransferase superfamily. tRNA (adenine-N(6)-)-methyltransferase family.

It is found in the cytoplasm. It carries out the reaction adenosine(37) in tRNA1(Val) + S-adenosyl-L-methionine = N(6)-methyladenosine(37) in tRNA1(Val) + S-adenosyl-L-homocysteine + H(+). Functionally, specifically methylates the adenine in position 37 of tRNA(1)(Val) (anticodon cmo5UAC). This is tRNA1(Val) (adenine(37)-N6)-methyltransferase from Vibrio parahaemolyticus serotype O3:K6 (strain RIMD 2210633).